The chain runs to 308 residues: Bacitracin transport ATP-binding protein BcrA (308 aa).

Residues 8–236 enclose the ABC transporter domain; the sequence is IETENLTKQY…NRKYTEFDVS (229 aa). 40 to 47 contacts ATP; that stretch reads GRNGAGKT.

This sequence belongs to the ABC transporter superfamily. In terms of assembly, the complex is probably composed of two ATP-binding proteins (BcrA) and two transmembrane proteins (BcrB).

Essential for high-level bacitracin resistance. Part of the ABC transporter complex BcrAB. Probably responsible for energy coupling to the transport system. The polypeptide is Bacitracin transport ATP-binding protein BcrA (Enterococcus faecalis (Streptococcus faecalis)).